A 519-amino-acid chain; its full sequence is MIPDVSHALTWLEAHPKALKGIRRGIERETLRVTADGHLASTGHPESLGAALTHQWITTDFAEALLEFITPVDGDIDHLLTFLRDIHRYTARKLGDERMWPLSMPCFIEAEQDIELAKYGSSNIGRFKTLYREGLKNRYGALMQTISGVHYNFSLPLEFWQAWAGVTDEQSGKEEISAGYFRLIRNYYRFGWVIPYLFGASPAICSSFLQGRETALPFERNGKGMCYLPYATSLRLSDLGYTNKSQSNLGITFNDLHTYVDALKRAIQTPSEEYVALGLKDGDRHLQLNTNVLQIENELYAPIRPKRVTRAGESPSDALLRGGIEYIEVRSLDINPFSPIGVDAVQARFLDLFLIWCVLADAPEMSSDELLCTRKNWDRVILEGRKPGQTIGIGCSDSRQPLETVGKALFADLRRVAEVLDGSESASYQQVCDELVASFDDPELTFSARILKVMQEKGIGGVGLELAEHYREMLQNEPLELLTEEQLSAERDASRQRQHELELKDKLSFEEYLALHGGQ.

The protein belongs to the glutamate--cysteine ligase type 1 family. Type 1 subfamily.

The enzyme catalyses L-cysteine + L-glutamate + ATP = gamma-L-glutamyl-L-cysteine + ADP + phosphate + H(+). It functions in the pathway sulfur metabolism; glutathione biosynthesis; glutathione from L-cysteine and L-glutamate: step 1/2. In Yersinia pseudotuberculosis serotype I (strain IP32953), this protein is Glutamate--cysteine ligase.